Consider the following 461-residue polypeptide: E3 ubiquitin-protein ligase TRIM15 (461 aa).

The RING-type zinc finger occupies 12–57; the sequence is CSDCQGRLEDAVTAACGHTFCRLCLPLPPQMGAQPSSRVLLCPVCQ. Residues 74–115 form a B box-type zinc finger; that stretch reads LGETYCEEHGEKIYFFCENDAEFLCVFCREGPSHQAHAVGFL. The Zn(2+) site is built by Cys-79, His-82, Cys-101, and His-107. A coiled-coil region spans residues 123-230; that stretch reads RDRLRGRLEA…EKCQQPASEL (108 aa). Positions 272–461 constitute a B30.2/SPRY domain; the sequence is EMLRAFSENL…KKGSCLTLKG (190 aa).

It belongs to the TRIM/RBCC family. As to quaternary structure, interacts with paxillin/PXN; this interaction recruits TRIM15 to focal adhesions. Interacts with TRIM8; this interaction prevents TRIM8 cytoplasmic translocation.

The protein localises to the cytoplasm. It is found in the nucleus. It localises to the cell junction. The protein resides in the focal adhesion. The catalysed reaction is S-ubiquitinyl-[E2 ubiquitin-conjugating enzyme]-L-cysteine + [acceptor protein]-L-lysine = [E2 ubiquitin-conjugating enzyme]-L-cysteine + N(6)-ubiquitinyl-[acceptor protein]-L-lysine.. E3 ubiquitin ligase that plays a role in several processes including innate antiviral immnity, cell migration and chemotaxis. Acts as a 'Lys-63'-specific ubiquitin ligase for MAPK1/ERK2 and MAPK3/ERK1, promoting their activation by facilitating their interaction with MAP2K1 and MAP2K2. Also plays a role in cell migration and chemotaxis by acting as a stable focal adhesion component upon recruitment by multi-adapter protein paxillin/PXN. Functions in the RIGI-mediated interferon induction pathway upstream or at the level of MAVS. Inhibits NF-kappa-B activation by turnover of 'Lys-63'-linked ubiquitination of MAP3K7/TAK1. Mechanistically, prevents TRIM8 cytoplasmic translocation and thus inhibits TRIM8-mediated 'Lys-63'-linked polyubiquitination of MAP3K7/TAK1 in the cytoplasm. Also has an important regulatory effect on the activation of hepatic stellate cells (HSCs). This is E3 ubiquitin-protein ligase TRIM15 (TRIM15) from Sus scrofa (Pig).